A 468-amino-acid polypeptide reads, in one-letter code: 6-phosphogluconate dehydrogenase, decarboxylating (468 aa).

NADP(+)-binding positions include 9–14 (GLAVMG), 32–34 (NRS), 73–75 (VKA), and Asn-101. Residues Asn-101 and 127–129 (SGG) each bind substrate. The active-site Proton acceptor is Lys-182. Position 185–186 (185–186 (HN)) interacts with substrate. Glu-189 acts as the Proton donor in catalysis. 5 residues coordinate substrate: Tyr-190, Lys-259, Arg-286, Arg-444, and His-450.

Belongs to the 6-phosphogluconate dehydrogenase family. Homodimer.

It catalyses the reaction 6-phospho-D-gluconate + NADP(+) = D-ribulose 5-phosphate + CO2 + NADPH. Its pathway is carbohydrate degradation; pentose phosphate pathway; D-ribulose 5-phosphate from D-glucose 6-phosphate (oxidative stage): step 3/3. Its function is as follows. Catalyzes the oxidative decarboxylation of 6-phosphogluconate to ribulose 5-phosphate and CO(2), with concomitant reduction of NADP to NADPH. In Staphylococcus epidermidis (strain ATCC 35984 / DSM 28319 / BCRC 17069 / CCUG 31568 / BM 3577 / RP62A), this protein is 6-phosphogluconate dehydrogenase, decarboxylating (gnd).